The sequence spans 157 residues: Dihydrofolate reductase type 15 (157 aa).

The DHFR domain occupies 2–156; sequence KLSLMAAISK…INYSYQIWQK (155 aa).

This sequence belongs to the dihydrofolate reductase family. Homodimer.

It carries out the reaction (6S)-5,6,7,8-tetrahydrofolate + NADP(+) = 7,8-dihydrofolate + NADPH + H(+). It participates in cofactor biosynthesis; tetrahydrofolate biosynthesis; 5,6,7,8-tetrahydrofolate from 7,8-dihydrofolate: step 1/1. Key enzyme in folate metabolism. Catalyzes an essential reaction for de novo glycine and purine synthesis, and for DNA precursor synthesis. In Escherichia coli, this protein is Dihydrofolate reductase type 15 (dhfrXV).